Reading from the N-terminus, the 177-residue chain is Coatomer subunit zeta-1 (177 aa).

The protein belongs to the adaptor complexes small subunit family. As to quaternary structure, oligomeric complex that consists of at least the alpha, beta, beta', gamma, delta, epsilon and zeta subunits.

Its subcellular location is the cytoplasm. It is found in the golgi apparatus membrane. It localises to the cytoplasmic vesicle. The protein resides in the COPI-coated vesicle membrane. Its function is as follows. The coatomer is a cytosolic protein complex that binds to dilysine motifs and reversibly associates with Golgi non-clathrin-coated vesicles, which further mediate biosynthetic protein transport from the ER, via the Golgi up to the trans Golgi network. Coatomer complex is required for budding from Golgi membranes, and is essential for the retrograde Golgi-to-ER transport of dilysine-tagged proteins. The zeta subunit may be involved in regulating the coat assembly and, hence, the rate of biosynthetic protein transport due to its association-dissociation properties with the coatomer complex. The chain is Coatomer subunit zeta-1 from Arabidopsis thaliana (Mouse-ear cress).